A 319-amino-acid polypeptide reads, in one-letter code: 12-(S)-hydroxy-5,8,10,14-eicosatetraenoic acid receptor (319 aa).

The Extracellular segment spans residues 1–16 (MERTNCSAASTVVETA). The N-linked (GlcNAc...) asparagine glycan is linked to Asn-5. Residues 17–37 (VGTMLTLECVLGLMGNAVALW) form a helical membrane-spanning segment. Residues 38-52 (TFFYRLKVWKPYAVY) are Cytoplasmic-facing. A helical membrane pass occupies residues 53–73 (LFNLVVADLLLATSLPFFAAF). The Extracellular portion of the chain corresponds to 74-91 (YLKGKTWKLGHMPCQVLL). Residues 92-110 (FLLAFSRGVGVAFLTTVAL) traverse the membrane as a helical segment. At 111–131 (DRYLRVVHPRLRVNLLSLRAA) the chain is on the cytoplasmic side. A helical membrane pass occupies residues 132 to 152 (WGISSLIWLLMVVLTPQNLLT). At 153–180 (CRTTQNSTECPSFYPTGGAKAIATCQEV) the chain is on the extracellular side. A helical transmembrane segment spans residues 181-201 (LFFLQVLLPFGLISFCNSGLI). The Cytoplasmic portion of the chain corresponds to 202–219 (RTLQKRLRESDKQPRIRR). A helical transmembrane segment spans residues 220–240 (ARVLVAIVLLLFGLCFLPSVL). The Extracellular segment spans residues 241–265 (TRVLVHIFQEFKSCSVQQAIVRASD). The helical transmembrane segment at 266-284 (IAGSLTCLHSTLSPAIYCF) threads the bilayer. Residues 285 to 319 (SNPAFTHSYRKVLKSLRGRRKAAESPSDNLRDSYS) are Cytoplasmic-facing.

This sequence belongs to the G-protein coupled receptor 1 family. Interacts with KRAS; in a farnesylation-dependent manner.

The protein localises to the cell membrane. Its function is as follows. High-affinity receptor for 12-(S)-hydroxy-5,8,10,14-eicosatetraenoic acid (12-S-HETE), with much lower affinities for other HETE isomers. 12-S-HETE is a eicosanoid, a 12-lipoxygenase (ALOX12) metabolite of arachidonic acid, involved in many physiologic and pathologic processes, such as cell growth, adhesion, inflammation and cancer promotion. 12-S-HETE-binding leads to activation of ERK1/2 (MAPK3/MAPK1), MEK, and NF-kappa-B pathways and leads to cell growth. Plays a crucial role for proliferation, survival and macropinocytosis of KRAS-dependent cancer cells by mediating the translocation of KRAS from the endoplasmic reticulum to the plasma membrane (PM) and its association with the PM. Contributes to enhanced immune responses by inducing dendrite protrusion of small intestinal CX3CR1(+) phagocytes for the uptake of luminal antigens. Also acts as a key receptor for 12-(S)-HETE-mediated liver ischemia reperfusion injury. Functionally, proton-sensing G protein-coupled receptor. This Mus musculus (Mouse) protein is 12-(S)-hydroxy-5,8,10,14-eicosatetraenoic acid receptor (Gpr31).